The sequence spans 537 residues: Tegument protein BRRF2 (537 aa).

Disordered regions lie at residues 322–466 (PRFL…AEEF) and 486–537 (GLRV…LSVV). Residues 334–347 (EPQQTCSQLTSRGN) are compositionally biased toward polar residues. Residues 420–441 (VTGSSQAAPSSSSVTPVASLSG) are compositionally biased toward low complexity. Residues 492–517 (DEDEDGSEDGEFSDLDLSDSDHEGDE) are compositionally biased toward acidic residues.

Belongs to the lymphocryptovirus BRRF2 family.

Its subcellular location is the virion tegument. The polypeptide is Tegument protein BRRF2 (Homo sapiens (Human)).